We begin with the raw amino-acid sequence, 86 residues long: Small ribosomal subunit protein uS17 (86 aa).

It belongs to the universal ribosomal protein uS17 family. Part of the 30S ribosomal subunit.

One of the primary rRNA binding proteins, it binds specifically to the 5'-end of 16S ribosomal RNA. In Helicobacter pylori (strain P12), this protein is Small ribosomal subunit protein uS17.